The following is a 226-amino-acid chain: Pre-mRNA-splicing factor SPF27 (226 aa).

Ala2 bears the N-acetylalanine mark. Ser94 carries the post-translational modification Phosphoserine. A coiled-coil region spans residues 139–223; the sequence is YNENLVHMIE…HGEANKENIR (85 aa).

Belongs to the SPF27 family. In terms of assembly, component of the pre-catalytic and catalytic spliceosome complexes. Component of the postcatalytic spliceosome P complex. Component of the PRP19-CDC5L splicing complex composed of a core complex comprising a homotetramer of PRPF19, CDC5L, PLRG1 and BCAS2, and at least three less stably associated proteins CTNNBL1, CWC15 and HSPA8. Interacts directly in the complex with PRPF19, CDC5L and PLRG1.

The protein localises to the nucleus. The protein resides in the nucleolus. Required for pre-mRNA splicing as component of the activated spliceosome. Component of the PRP19-CDC5L complex that forms an integral part of the spliceosome and is required for activating pre-mRNA splicing. May have a scaffolding role in the spliceosome assembly as it contacts all other components of the core complex. The PRP19-CDC5L complex may also play a role in the response to DNA damage (DDR). The sequence is that of Pre-mRNA-splicing factor SPF27 (BCAS2) from Pongo abelii (Sumatran orangutan).